We begin with the raw amino-acid sequence, 506 residues long: Catalase (506 aa).

Residues histidine 73 and asparagine 146 contribute to the active site. Position 356 (tyrosine 356) interacts with heme. Positions 504 to 506 (SKF) match the Microbody targeting signal motif.

It belongs to the catalase family. In terms of assembly, homotetramer. Requires heme as cofactor.

It localises to the peroxisome matrix. It carries out the reaction 2 H2O2 = O2 + 2 H2O. Functionally, catalyzes the degradation of hydrogen peroxide (H(2)O(2)) generated by peroxisomal oxidases to water and oxygen, thereby protecting cells from the toxic effects of hydrogen peroxide. The sequence is that of Catalase (Cat) from Drosophila melanogaster (Fruit fly).